The chain runs to 637 residues: Biosynthetic arginine decarboxylase (637 aa).

Residue K101 is modified to N6-(pyridoxal phosphate)lysine. Residue 286–296 (FDVGGGLAVDY) coordinates substrate.

Belongs to the Orn/Lys/Arg decarboxylase class-II family. SpeA subfamily. Requires Mg(2+) as cofactor. Pyridoxal 5'-phosphate is required as a cofactor.

The enzyme catalyses L-arginine + H(+) = agmatine + CO2. The protein operates within amine and polyamine biosynthesis; agmatine biosynthesis; agmatine from L-arginine: step 1/1. In terms of biological role, catalyzes the biosynthesis of agmatine from arginine. This is Biosynthetic arginine decarboxylase from Shewanella loihica (strain ATCC BAA-1088 / PV-4).